We begin with the raw amino-acid sequence, 260 residues long: GDNF family receptor alpha-4 (260 aa).

A signal peptide spans 1-23 (MAHCMESALLLLLLLGSASFTDG). Asn-184 is a glycosylation site (N-linked (GlcNAc...) asparagine). A lipid anchor (GPI-anchor amidated threonine) is attached at Thr-237. Positions 238–260 (AGCCFPRVSWLYALTALALQALL) are cleaved as a propeptide — removed in mature form.

Belongs to the GDNFR family. In terms of assembly, interacts with ARTN ligand and RET: forms a 2:2:2 ternary complex composed of ARTN ligand, GFRA3 and RET receptor. Interacts with SORL1. In terms of tissue distribution, expressed in many tissues including adrenal medulla, brain neurons, with highest levels in the cerebral cortex and hippocampus. Moderate levels found in the gut circular muscle and myenteric ganglia as well as in other peripheral ganglia, including the sensory dorsal root and trigeminal as well as superior cervical and sympathetic chain ganglia. Isoform a1, isoform a2, isoform b1 and isoform b2 are exclusively found in the thyroid, parthyroid and pituitary glands.

It localises to the cell membrane. The protein resides in the secreted. In terms of biological role, receptor for persephin (PSPN), a growth factor that exhibits neurotrophic activity on mesencephalic dopaminergic and motor neurons. Acts by binding to its coreceptor, GFRA4, leading to autophosphorylation and activation of the RET receptor. May be important in C-cell development and, in the postnatal development of the adrenal medulla. The polypeptide is GDNF family receptor alpha-4 (Gfra4) (Mus musculus (Mouse)).